The chain runs to 124 residues: Protein YebF (124 aa).

Residues 1–27 form the signal peptide; that stretch reads MKTCHIINRVGLSGVALLLTVSFTVSA. In terms of domain architecture, YebF/Cmi spans 36 to 123; that stretch reads KFISCDNLTK…QQNTISYSEL (88 aa). Cysteines 40 and 113 form a disulfide.

It belongs to the YebF family.

It is found in the secreted. In Photorhabdus laumondii subsp. laumondii (strain DSM 15139 / CIP 105565 / TT01) (Photorhabdus luminescens subsp. laumondii), this protein is Protein YebF.